Reading from the N-terminus, the 212-residue chain is MSGMFITFEGPEGAGKTTVIRKVHEEMERQGYAVMATREPGGIDIAEQIREVILNEKNTKMDAKTEALLYAAARRQHLAEKVEPALQRGETVLCDRFVDSSLAYQGYARGLGIDQVRSINDFAIDGTMPQMTIYFSITPEEGLKRIHANQGREKNRLDMETLNFHQLVREGYELLIAQSPERFHVVDASKPMQDVYEEVLRVIQDTLKKNQI.

10–17 (GPEGAGKT) serves as a coordination point for ATP.

Belongs to the thymidylate kinase family.

The catalysed reaction is dTMP + ATP = dTDP + ADP. Phosphorylation of dTMP to form dTDP in both de novo and salvage pathways of dTTP synthesis. This chain is Thymidylate kinase, found in Bacillus pumilus (strain SAFR-032).